The primary structure comprises 259 residues: Thiazole synthase (259 aa).

Lysine 99 serves as the catalytic Schiff-base intermediate with DXP. 1-deoxy-D-xylulose 5-phosphate contacts are provided by residues glycine 161, 187–188 (AG), and 209–219 (NSAIACAQNPI).

Belongs to the ThiG family. As to quaternary structure, homotetramer. Forms heterodimers with either ThiH or ThiS.

Its subcellular location is the cytoplasm. It catalyses the reaction [ThiS sulfur-carrier protein]-C-terminal-Gly-aminoethanethioate + 2-iminoacetate + 1-deoxy-D-xylulose 5-phosphate = [ThiS sulfur-carrier protein]-C-terminal Gly-Gly + 2-[(2R,5Z)-2-carboxy-4-methylthiazol-5(2H)-ylidene]ethyl phosphate + 2 H2O + H(+). It participates in cofactor biosynthesis; thiamine diphosphate biosynthesis. Its function is as follows. Catalyzes the rearrangement of 1-deoxy-D-xylulose 5-phosphate (DXP) to produce the thiazole phosphate moiety of thiamine. Sulfur is provided by the thiocarboxylate moiety of the carrier protein ThiS. In vitro, sulfur can be provided by H(2)S. The polypeptide is Thiazole synthase (Aliarcobacter butzleri (strain RM4018) (Arcobacter butzleri)).